The sequence spans 85 residues: MRKNASALKRSRQNLKRKIRNVSVESELKTIEKRCINMIKAGRKDEAIEFFKFVAKKLDTAARKRIIHKNKAARKKSRLNILLLK.

The protein belongs to the bacterial ribosomal protein bS20 family.

In terms of biological role, binds directly to 16S ribosomal RNA. The polypeptide is Small ribosomal subunit protein bS20 (Borrelia garinii subsp. bavariensis (strain ATCC BAA-2496 / DSM 23469 / PBi) (Borreliella bavariensis)).